Reading from the N-terminus, the 180-residue chain is ADP ribosylation factor 4 (180 aa).

Gly2 carries N-myristoyl glycine lipidation. GTP-binding positions include 24 to 31, 67 to 71, and 126 to 129; these read GLDAAGKT, DVGGQ, and NKQD.

This sequence belongs to the small GTPase superfamily. Arf family. In terms of tissue distribution, uniformly distributed throughout adults.

The protein resides in the golgi apparatus. Its function is as follows. GTP-binding protein involved in protein trafficking; may modulate vesicle budding and uncoating within the Golgi apparatus. The polypeptide is ADP ribosylation factor 4 (Drosophila melanogaster (Fruit fly)).